The following is a 248-amino-acid chain: PF03932 family protein CutC (248 aa).

This sequence belongs to the CutC family. Homodimer.

Its subcellular location is the cytoplasm. This is PF03932 family protein CutC from Salmonella newport (strain SL254).